Here is a 754-residue protein sequence, read N- to C-terminus: 5-methyltetrahydropteroyltriglutamate--homocysteine methyltransferase (754 aa).

5-methyltetrahydropteroyltri-L-glutamate is bound by residues 17 to 20 (RELK) and lysine 117. Residues 431–433 (IGS) and glutamate 484 contribute to the L-homocysteine site. L-methionine-binding positions include 431–433 (IGS) and glutamate 484. Residues 515–516 (RC) and tryptophan 561 contribute to the 5-methyltetrahydropteroyltri-L-glutamate site. Residue aspartate 599 participates in L-homocysteine binding. Residue aspartate 599 participates in L-methionine binding. Glutamate 605 is a binding site for 5-methyltetrahydropteroyltri-L-glutamate. Residues histidine 641, cysteine 643, and glutamate 665 each coordinate Zn(2+). Histidine 694 (proton donor) is an active-site residue. Residue cysteine 726 participates in Zn(2+) binding.

The protein belongs to the vitamin-B12 independent methionine synthase family. Requires Zn(2+) as cofactor.

It carries out the reaction 5-methyltetrahydropteroyltri-L-glutamate + L-homocysteine = tetrahydropteroyltri-L-glutamate + L-methionine. It participates in amino-acid biosynthesis; L-methionine biosynthesis via de novo pathway; L-methionine from L-homocysteine (MetE route): step 1/1. Functionally, catalyzes the transfer of a methyl group from 5-methyltetrahydrofolate to homocysteine resulting in methionine formation. The chain is 5-methyltetrahydropteroyltriglutamate--homocysteine methyltransferase from Salmonella arizonae (strain ATCC BAA-731 / CDC346-86 / RSK2980).